Consider the following 215-residue polypeptide: Adenylate kinase (215 aa).

10–15 (GAGKGT) contributes to the ATP binding site. Positions 30–59 (STGDMLRAAVKAGSPLGQQVKGVMDSGGLV) are NMP. Residues Thr-31, Arg-36, 57 to 59 (GLV), 85 to 88 (GFPR), and Gln-92 contribute to the AMP site. An LID region spans residues 122–159 (GRRVHPASGRVYHTEHNPPKVAGKDDVTGEELIQREDD). ATP contacts are provided by residues Arg-123 and 132 to 133 (VY). Arg-156 and Arg-167 together coordinate AMP. Gly-201 is a binding site for ATP.

The protein belongs to the adenylate kinase family. As to quaternary structure, monomer.

It is found in the cytoplasm. It carries out the reaction AMP + ATP = 2 ADP. The protein operates within purine metabolism; AMP biosynthesis via salvage pathway; AMP from ADP: step 1/1. Functionally, catalyzes the reversible transfer of the terminal phosphate group between ATP and AMP. Plays an important role in cellular energy homeostasis and in adenine nucleotide metabolism. This Pseudomonas aeruginosa (strain LESB58) protein is Adenylate kinase.